A 120-amino-acid chain; its full sequence is Large ribosomal subunit protein bL19 (120 aa).

This sequence belongs to the bacterial ribosomal protein bL19 family.

Functionally, this protein is located at the 30S-50S ribosomal subunit interface and may play a role in the structure and function of the aminoacyl-tRNA binding site. This Picosynechococcus sp. (strain ATCC 27264 / PCC 7002 / PR-6) (Agmenellum quadruplicatum) protein is Large ribosomal subunit protein bL19.